The following is a 137-amino-acid chain: NADH-quinone oxidoreductase subunit A (137 aa).

3 consecutive transmembrane segments (helical) span residues 12–32 (WGFAIFLLGVVGLCAFMLGLS), 66–86 (FYLVAMLFVIFDIEALFLFAW), and 95–115 (WTGFVEALVFIAILLAGLVYL).

The protein belongs to the complex I subunit 3 family. In terms of assembly, NDH-1 is composed of 13 different subunits. Subunits NuoA, H, J, K, L, M, N constitute the membrane sector of the complex.

It is found in the cell inner membrane. The catalysed reaction is a quinone + NADH + 5 H(+)(in) = a quinol + NAD(+) + 4 H(+)(out). Its function is as follows. NDH-1 shuttles electrons from NADH, via FMN and iron-sulfur (Fe-S) centers, to quinones in the respiratory chain. The immediate electron acceptor for the enzyme in this species is believed to be ubiquinone. Couples the redox reaction to proton translocation (for every two electrons transferred, four hydrogen ions are translocated across the cytoplasmic membrane), and thus conserves the redox energy in a proton gradient. The polypeptide is NADH-quinone oxidoreductase subunit A (Pseudomonas putida (strain ATCC 700007 / DSM 6899 / JCM 31910 / BCRC 17059 / LMG 24140 / F1)).